The primary structure comprises 410 residues: Arginine biosynthesis bifunctional protein ArgJ (410 aa).

Substrate is bound by residues Thr160, Lys186, Thr197, Glu283, Asn405, and Thr410. The active-site Nucleophile is Thr197.

The protein belongs to the ArgJ family. As to quaternary structure, heterotetramer of two alpha and two beta chains.

The protein localises to the cytoplasm. The enzyme catalyses N(2)-acetyl-L-ornithine + L-glutamate = N-acetyl-L-glutamate + L-ornithine. The catalysed reaction is L-glutamate + acetyl-CoA = N-acetyl-L-glutamate + CoA + H(+). It participates in amino-acid biosynthesis; L-arginine biosynthesis; L-ornithine and N-acetyl-L-glutamate from L-glutamate and N(2)-acetyl-L-ornithine (cyclic): step 1/1. Its pathway is amino-acid biosynthesis; L-arginine biosynthesis; N(2)-acetyl-L-ornithine from L-glutamate: step 1/4. Catalyzes two activities which are involved in the cyclic version of arginine biosynthesis: the synthesis of N-acetylglutamate from glutamate and acetyl-CoA as the acetyl donor, and of ornithine by transacetylation between N(2)-acetylornithine and glutamate. In Geobacillus kaustophilus (strain HTA426), this protein is Arginine biosynthesis bifunctional protein ArgJ.